Consider the following 415-residue polypeptide: Palmitoyl-acyl carrier protein thioesterase, chloroplastic (415 aa).

2 stretches are compositionally biased toward low complexity: residues 1–16 (MVAT…LPSA) and 24–41 (KLGN…KSTP). Residues 1 to 60 (MVATAASSAFFPLPSADTSSRPGKLGNKPSSLSPLKPKSTPNGGLQVKANASAPPKINGS) constitute a chloroplast transit peptide. Positions 1-81 (MVATAASSAF…QEDAHSAPPP (81 aa)) are disordered. Residues Asn314, His316, and Cys351 contribute to the active site.

This sequence belongs to the acyl-ACP thioesterase family.

The protein resides in the plastid. It is found in the chloroplast. It catalyses the reaction hexadecanoyl-[ACP] + H2O = hexadecanoate + holo-[ACP] + H(+). In terms of biological role, plays an essential role in chain termination during de novo fatty acid synthesis. High thioesterase activity for palmitoyl-ACP versus other acyl-ACPs. In Cuphea hookeriana (Cigar plant), this protein is Palmitoyl-acyl carrier protein thioesterase, chloroplastic (FATB1).